A 147-amino-acid chain; its full sequence is 3-hydroxyacyl-[acyl-carrier-protein] dehydratase FabZ (147 aa).

Residue H49 is part of the active site.

This sequence belongs to the thioester dehydratase family. FabZ subfamily.

It is found in the cytoplasm. The catalysed reaction is a (3R)-hydroxyacyl-[ACP] = a (2E)-enoyl-[ACP] + H2O. In terms of biological role, involved in unsaturated fatty acids biosynthesis. Catalyzes the dehydration of short chain beta-hydroxyacyl-ACPs and long chain saturated and unsaturated beta-hydroxyacyl-ACPs. The polypeptide is 3-hydroxyacyl-[acyl-carrier-protein] dehydratase FabZ (Alkaliphilus metalliredigens (strain QYMF)).